The chain runs to 261 residues: Ribosomal RNA small subunit methyltransferase A (261 aa).

Positions 20, 22, 47, 68, 90, and 110 each coordinate S-adenosyl-L-methionine.

Belongs to the class I-like SAM-binding methyltransferase superfamily. rRNA adenine N(6)-methyltransferase family. RsmA subfamily.

It is found in the cytoplasm. The enzyme catalyses adenosine(1518)/adenosine(1519) in 16S rRNA + 4 S-adenosyl-L-methionine = N(6)-dimethyladenosine(1518)/N(6)-dimethyladenosine(1519) in 16S rRNA + 4 S-adenosyl-L-homocysteine + 4 H(+). Functionally, specifically dimethylates two adjacent adenosines (A1518 and A1519) in the loop of a conserved hairpin near the 3'-end of 16S rRNA in the 30S particle. May play a critical role in biogenesis of 30S subunits. This chain is Ribosomal RNA small subunit methyltransferase A, found in Prosthecochloris aestuarii (strain DSM 271 / SK 413).